The primary structure comprises 621 residues: UvrABC system protein C (621 aa).

The GIY-YIG domain occupies 13–92; sequence NEPGVYLMKN…IKKYSPKYNI (80 aa). The UVR domain occupies 204 to 239; that stretch reads RSLLNKLKEEMQSASGNLEFEKAASLRDKMIAIENI.

It belongs to the UvrC family. As to quaternary structure, interacts with UvrB in an incision complex.

The protein localises to the cytoplasm. Functionally, the UvrABC repair system catalyzes the recognition and processing of DNA lesions. UvrC both incises the 5' and 3' sides of the lesion. The N-terminal half is responsible for the 3' incision and the C-terminal half is responsible for the 5' incision. This Clostridium beijerinckii (strain ATCC 51743 / NCIMB 8052) (Clostridium acetobutylicum) protein is UvrABC system protein C.